Reading from the N-terminus, the 93-residue chain is Sec-independent protein translocase protein TatA (93 aa).

Residues 1-21 (MGSLSPWHWAILAVVVILLFG) traverse the membrane as a helical segment. Positions 45 to 93 (EMQSENKTETSALGAQSESSAANPTPVQSQRVDPPAPSEQGHSEARPAS) are disordered. Residues 53–75 (ETSALGAQSESSAANPTPVQSQR) show a composition bias toward polar residues.

The protein belongs to the TatA/E family. In terms of assembly, the Tat system comprises two distinct complexes: a TatABC complex, containing multiple copies of TatA, TatB and TatC subunits, and a separate TatA complex, containing only TatA subunits. Substrates initially bind to the TatABC complex, which probably triggers association of the separate TatA complex to form the active translocon.

It is found in the cell membrane. Part of the twin-arginine translocation (Tat) system that transports large folded proteins containing a characteristic twin-arginine motif in their signal peptide across membranes. TatA could form the protein-conducting channel of the Tat system. In Mycolicibacterium paratuberculosis (strain ATCC BAA-968 / K-10) (Mycobacterium paratuberculosis), this protein is Sec-independent protein translocase protein TatA.